Consider the following 198-residue polypeptide: Putative Do-like 15 protein (198 aa).

The interval 48–198 is serine protease; the sequence is KIFSFSREPN…VFENDSPSDK (151 aa). Active-site charge relay system residues include H86 and S175.

The protein belongs to the peptidase S1B family.

The sequence is that of Putative Do-like 15 protein (DEGP15) from Arabidopsis thaliana (Mouse-ear cress).